A 583-amino-acid chain; its full sequence is Aspartate--tRNA(Asp/Asn) ligase (583 aa).

Glu172 serves as a coordination point for L-aspartate. The tract at residues 196-199 is aspartate; that stretch reads QMLK. Arg218 lines the L-aspartate pocket. ATP-binding positions include 218–220 and Gln227; that span reads RDE. His446 is a binding site for L-aspartate. Glu480 contributes to the ATP binding site. Residue Arg487 coordinates L-aspartate. 532-535 provides a ligand contact to ATP; sequence GLDR.

It belongs to the class-II aminoacyl-tRNA synthetase family. Type 1 subfamily. As to quaternary structure, homodimer.

It localises to the cytoplasm. The catalysed reaction is tRNA(Asx) + L-aspartate + ATP = L-aspartyl-tRNA(Asx) + AMP + diphosphate. Functionally, aspartyl-tRNA synthetase with relaxed tRNA specificity since it is able to aspartylate not only its cognate tRNA(Asp) but also tRNA(Asn). Reaction proceeds in two steps: L-aspartate is first activated by ATP to form Asp-AMP and then transferred to the acceptor end of tRNA(Asp/Asn). The sequence is that of Aspartate--tRNA(Asp/Asn) ligase from Streptococcus mutans serotype c (strain ATCC 700610 / UA159).